Reading from the N-terminus, the 92-residue chain is Small integral membrane protein 12 (92 aa).

Residues 15-34 traverse the membrane as a helical segment; that stretch reads YVTFPVAFVVGAVGYHLEWF.

Belongs to the SMIM12 family.

The protein resides in the membrane. This chain is Small integral membrane protein 12 (SMIM12), found in Nomascus leucogenys (Northern white-cheeked gibbon).